A 91-amino-acid chain; its full sequence is Acylphosphatase (91 aa).

Residues 6 to 91 (CMRCYISGRV…WKDYISFDVL (86 aa)) enclose the Acylphosphatase-like domain. Residues arginine 21 and asparagine 39 contribute to the active site.

It belongs to the acylphosphatase family.

The enzyme catalyses an acyl phosphate + H2O = a carboxylate + phosphate + H(+). In Legionella pneumophila (strain Paris), this protein is Acylphosphatase (acyP).